We begin with the raw amino-acid sequence, 536 residues long: Peptide chain release factor 3 (536 aa).

A tr-type G domain is found at 13–281; it reads SHRRTFAIIS…ALIDWAPAPQ (269 aa). GTP contacts are provided by residues 22-29, 90-94, and 144-147; these read SHPDAGKT, DTPGH, and NKCD.

This sequence belongs to the TRAFAC class translation factor GTPase superfamily. Classic translation factor GTPase family. PrfC subfamily.

Its subcellular location is the cytoplasm. Its function is as follows. Increases the formation of ribosomal termination complexes and stimulates activities of RF-1 and RF-2. It binds guanine nucleotides and has strong preference for UGA stop codons. It may interact directly with the ribosome. The stimulation of RF-1 and RF-2 is significantly reduced by GTP and GDP, but not by GMP. The sequence is that of Peptide chain release factor 3 from Chromobacterium violaceum (strain ATCC 12472 / DSM 30191 / JCM 1249 / CCUG 213 / NBRC 12614 / NCIMB 9131 / NCTC 9757 / MK).